Reading from the N-terminus, the 296-residue chain is Nucleotide-binding protein SGO_0954 (296 aa).

Gly-13–Thr-20 is a binding site for ATP. Residue Asp-63–Ser-66 coordinates GTP.

Belongs to the RapZ-like family.

Displays ATPase and GTPase activities. This chain is Nucleotide-binding protein SGO_0954, found in Streptococcus gordonii (strain Challis / ATCC 35105 / BCRC 15272 / CH1 / DL1 / V288).